An 874-amino-acid polypeptide reads, in one-letter code: Alanine--tRNA ligase (874 aa).

Zn(2+) contacts are provided by H562, H566, C663, and H667.

It belongs to the class-II aminoacyl-tRNA synthetase family. It depends on Zn(2+) as a cofactor.

It localises to the cytoplasm. The catalysed reaction is tRNA(Ala) + L-alanine + ATP = L-alanyl-tRNA(Ala) + AMP + diphosphate. Catalyzes the attachment of alanine to tRNA(Ala) in a two-step reaction: alanine is first activated by ATP to form Ala-AMP and then transferred to the acceptor end of tRNA(Ala). Also edits incorrectly charged Ser-tRNA(Ala) and Gly-tRNA(Ala) via its editing domain. The sequence is that of Alanine--tRNA ligase from Bordetella bronchiseptica (strain ATCC BAA-588 / NCTC 13252 / RB50) (Alcaligenes bronchisepticus).